Consider the following 218-residue polypeptide: Small ribosomal subunit protein uS3c (218 aa).

The KH type-2 domain occupies 47 to 118 (VQKNMKTSSG…KLNIAITRIE (72 aa)).

The protein belongs to the universal ribosomal protein uS3 family. In terms of assembly, part of the 30S ribosomal subunit.

The protein localises to the plastid. It localises to the chloroplast. The sequence is that of Small ribosomal subunit protein uS3c (rps3) from Helianthus annuus (Common sunflower).